The chain runs to 445 residues: Phosphoglucosamine mutase (445 aa).

The Phosphoserine intermediate role is filled by Ser102. 4 residues coordinate Mg(2+): Ser102, Asp240, Asp242, and Asp244. Phosphoserine is present on Ser102.

Belongs to the phosphohexose mutase family. Requires Mg(2+) as cofactor. Post-translationally, activated by phosphorylation.

It carries out the reaction alpha-D-glucosamine 1-phosphate = D-glucosamine 6-phosphate. Its function is as follows. Catalyzes the conversion of glucosamine-6-phosphate to glucosamine-1-phosphate. The chain is Phosphoglucosamine mutase from Mycobacterium marinum (strain ATCC BAA-535 / M).